An 82-amino-acid polypeptide reads, in one-letter code: Small ribosomal subunit protein uS17 (82 aa).

Belongs to the universal ribosomal protein uS17 family. Part of the 30S ribosomal subunit.

In terms of biological role, one of the primary rRNA binding proteins, it binds specifically to the 5'-end of 16S ribosomal RNA. The polypeptide is Small ribosomal subunit protein uS17 (Shewanella frigidimarina (strain NCIMB 400)).